Reading from the N-terminus, the 96-residue chain is Large ribosomal subunit protein uL23 (96 aa).

It belongs to the universal ribosomal protein uL23 family. In terms of assembly, part of the 50S ribosomal subunit. Contacts protein L29, and trigger factor when it is bound to the ribosome.

In terms of biological role, one of the early assembly proteins it binds 23S rRNA. One of the proteins that surrounds the polypeptide exit tunnel on the outside of the ribosome. Forms the main docking site for trigger factor binding to the ribosome. This chain is Large ribosomal subunit protein uL23, found in Clostridioides difficile (strain 630) (Peptoclostridium difficile).